The sequence spans 215 residues: Pyridoxine/pyridoxamine 5'-phosphate oxidase (215 aa).

Substrate contacts are provided by residues Arg-9–Tyr-12 and Lys-69. FMN contacts are provided by residues Arg-64–Lys-69, Phe-79–Thr-80, Lys-86, and Gln-108. Residues Tyr-126, Arg-130, and Ser-134 each coordinate substrate. FMN-binding positions include Gln-143 to Ser-144 and Trp-188. Residue Arg-194 to His-196 participates in substrate binding. Arg-198 is a binding site for FMN.

It belongs to the pyridoxamine 5'-phosphate oxidase family. As to quaternary structure, homodimer. FMN is required as a cofactor.

It catalyses the reaction pyridoxamine 5'-phosphate + O2 + H2O = pyridoxal 5'-phosphate + H2O2 + NH4(+). The catalysed reaction is pyridoxine 5'-phosphate + O2 = pyridoxal 5'-phosphate + H2O2. It functions in the pathway cofactor metabolism; pyridoxal 5'-phosphate salvage; pyridoxal 5'-phosphate from pyridoxamine 5'-phosphate: step 1/1. It participates in cofactor metabolism; pyridoxal 5'-phosphate salvage; pyridoxal 5'-phosphate from pyridoxine 5'-phosphate: step 1/1. In terms of biological role, catalyzes the oxidation of either pyridoxine 5'-phosphate (PNP) or pyridoxamine 5'-phosphate (PMP) into pyridoxal 5'-phosphate (PLP). The protein is Pyridoxine/pyridoxamine 5'-phosphate oxidase of Pseudomonas savastanoi pv. phaseolicola (strain 1448A / Race 6) (Pseudomonas syringae pv. phaseolicola (strain 1448A / Race 6)).